The primary structure comprises 547 residues: Pyochelin synthase PchD (547 aa).

The protein belongs to the ATP-dependent AMP-binding enzyme family.

It carries out the reaction salicylate + holo-[ACP] + ATP = salicyl-[ACP] + AMP + diphosphate. The protein operates within siderophore biosynthesis. It participates in antifungal biosynthesis. Its function is as follows. Involved in the biosynthesis of the siderophore pyochelin. Specifically adenylates salicylate and loads it onto the holo form of PchE via a thioester linkage to the phosphopanthetheine moiety. Is also involved in the synthesis of the antifungal antibiotic dihydroaeruginoic acid (Dha or hydroxyphenyl-thiazolinyl-carboxylate), a precursor of pyochelin. This is Pyochelin synthase PchD from Pseudomonas aeruginosa (strain ATCC 15692 / DSM 22644 / CIP 104116 / JCM 14847 / LMG 12228 / 1C / PRS 101 / PAO1).